The following is a 539-amino-acid chain: Effector protein hopAB1 (539 aa).

Disordered stretches follow at residues 1–93 (MPGI…PEAQ), 163–220 (QTVR…RHPQ), 230–249 (ASAA…LRRL), and 315–336 (RQTT…SGRR). Over residues 18 to 31 (TDGEPVTEREHDSS) the composition is skewed to basic and acidic residues. Positions 181-194 (SSSGSSQRSLIGRS) are enriched in low complexity.

Belongs to the HopAB family.

Its subcellular location is the secreted. In terms of biological role, effector protein that plays different roles depending on the species and plant cultivars that interact with the pathogen. Acts as a virulence determinant by enhancing the development of disease symptoms and bacterial growth. Acts as an avirulence factor by eliciting hypersensitive response (HR) and plant resistance. This is Effector protein hopAB1 (hopAB1) from Pseudomonas savastanoi pv. phaseolicola (strain 1448A / Race 6) (Pseudomonas syringae pv. phaseolicola (strain 1448A / Race 6)).